Reading from the N-terminus, the 364-residue chain is UDP-N-acetylglucosamine--N-acetylmuramyl-(pentapeptide) pyrophosphoryl-undecaprenol N-acetylglucosamine transferase (364 aa).

Residues 10-12 (TGG), asparagine 124, serine 195, and glutamine 295 contribute to the UDP-N-acetyl-alpha-D-glucosamine site.

Belongs to the glycosyltransferase 28 family. MurG subfamily.

Its subcellular location is the cell membrane. The enzyme catalyses di-trans,octa-cis-undecaprenyl diphospho-N-acetyl-alpha-D-muramoyl-L-alanyl-D-glutamyl-meso-2,6-diaminopimeloyl-D-alanyl-D-alanine + UDP-N-acetyl-alpha-D-glucosamine = di-trans,octa-cis-undecaprenyl diphospho-[N-acetyl-alpha-D-glucosaminyl-(1-&gt;4)]-N-acetyl-alpha-D-muramoyl-L-alanyl-D-glutamyl-meso-2,6-diaminopimeloyl-D-alanyl-D-alanine + UDP + H(+). Its pathway is cell wall biogenesis; peptidoglycan biosynthesis. In terms of biological role, cell wall formation. Catalyzes the transfer of a GlcNAc subunit on undecaprenyl-pyrophosphoryl-MurNAc-pentapeptide (lipid intermediate I) to form undecaprenyl-pyrophosphoryl-MurNAc-(pentapeptide)GlcNAc (lipid intermediate II). The protein is UDP-N-acetylglucosamine--N-acetylmuramyl-(pentapeptide) pyrophosphoryl-undecaprenol N-acetylglucosamine transferase of Bacillus pumilus (strain SAFR-032).